We begin with the raw amino-acid sequence, 451 residues long: Phenylalanine--tRNA ligase, mitochondrial (451 aa).

Residues 157 to 160 (SAHQ), Arg179, 186 to 188 (QHY), and 193 to 195 (QLE) contribute to the substrate site. An N6-acetyllysine modification is found at Lys202. Glu287 and Phe312 together coordinate substrate. The 93-residue stretch at 358–450 (SKYPAVFNDI…AVQLLGVEGR (93 aa)) folds into the FDX-ACB domain.

The protein belongs to the class-II aminoacyl-tRNA synthetase family. Monomer.

It localises to the mitochondrion matrix. Its subcellular location is the mitochondrion. The enzyme catalyses tRNA(Phe) + L-phenylalanine + ATP = L-phenylalanyl-tRNA(Phe) + AMP + diphosphate + H(+). Is responsible for the charging of tRNA(Phe) with phenylalanine in mitochondrial translation. To a lesser extent, also catalyzes direct attachment of m-Tyr (an oxidized version of Phe) to tRNA(Phe), thereby opening the way for delivery of the misacylated tRNA to the ribosome and incorporation of ROS-damaged amino acid into proteins. The polypeptide is Phenylalanine--tRNA ligase, mitochondrial (Fars2) (Mus musculus (Mouse)).